Consider the following 242-residue polypeptide: Probable septum site-determining protein MinC (242 aa).

The protein belongs to the MinC family. In terms of assembly, interacts with MinD and FtsZ.

In terms of biological role, cell division inhibitor that blocks the formation of polar Z ring septums. Rapidly oscillates between the poles of the cell to destabilize FtsZ filaments that have formed before they mature into polar Z rings. Prevents FtsZ polymerization. The sequence is that of Probable septum site-determining protein MinC from Agrobacterium fabrum (strain C58 / ATCC 33970) (Agrobacterium tumefaciens (strain C58)).